Here is a 778-residue protein sequence, read N- to C-terminus: MTTRQATKDPLLRGVSPTPSKIPVRSQKRTPFPTVTSCAVDQENQDPRRWVQKPPLNIQRPLVDSAGPRPKARHQAETSQRLVGISQPRNPLEELRPSPRGQNVGPGPPAQTEAPGTIEFVADPAALATILSGEGVKSCHLGRQPSLAKRVLVRGSQGGTTQRVQGVRASAYLAPRTPTHRLDPARASCFSRLEGPGPRGRTLCPQRLQALISPSGPSFHPSTRPSFQELRRETAGSSRTSVSQASGLLLETPVQPAFSLPKGEREVVTHSDEGGVASLGLAQRVPLRENREMSHTRDSHDSHLMPSPAPVAQPLPGHVVPCPSPFGRAQRVPSPGPPTLTSYSVLRRLTVQPKTRFTPMPSTPRVQQAQWLRGVSPQSCSEDPALPWEQVAVRLFDQESCIRSLEGSGKPPVATPSGPHSNRTPSLQEVKIQRIGILQQLLRQEVEGLVGGQCVPLNGGSSLDMVELQPLLTEISRTLNATEHNSGTSHLPGLLKHSGLPKPCLPEECGEPQPCPPAEPGPPEAFCRSEPEIPEPSLQEQLEVPEPYPPAEPRPLESCCRSEPEIPESSRQEQLEVPEPCPPAEPRPLESYCRIEPEIPESSRQEQLEVPEPCPPAEPGPLQPSTQGQSGPPGPCPRVELGASEPCTLEHRSLESSLPPCCSQWAPATTSLIFSSQHPLCASPPICSLQSLRPPAGQAGLSNLAPRTLALRERLKSCLTAIHCFHEARLDDECAFYTSRAPPSGPTRVCTNPVATLLEWQDALCFIPVGSAAPQGSP.

The span at 1–11 (MTTRQATKDPL) shows a compositional bias: basic and acidic residues. The disordered stretch occupies residues 1–115 (MTTRQATKDP…PGPPAQTEAP (115 aa)). Residues Ser16, Ser98, and Ser170 each carry the phosphoserine modification. The interval 212 to 244 (ISPSGPSFHPSTRPSFQELRRETAGSSRTSVSQ) is disordered. Residues 235–244 (AGSSRTSVSQ) are compositionally biased toward polar residues. Phosphoserine occurs at positions 324, 334, 344, and 362. The residue at position 363 (Thr363) is a Phosphothreonine. A Phosphoserine modification is found at Ser376. Disordered stretches follow at residues 406–425 (EGSG…NRTP), 508–587 (ECGE…AEPR), and 600–641 (PESS…RVEL). Over residues 513–523 (QPCPPAEPGPP) the composition is skewed to pro residues. 4 consecutive repeat copies span residues 516-548 (PPAE…PEPY), 549-581 (PPAE…PEPC), 582-614 (PPAE…PEPC), and 615-647 (PPAE…SEPC). The interval 516-647 (PPAEPGPPEA…RVELGASEPC (132 aa)) is 4 X 33 AA approximate tandem repeats. Over residues 560–574 (CRSEPEIPESSRQEQ) the composition is skewed to basic and acidic residues. Residues 612–622 (EPCPPAEPGPL) are compositionally biased toward pro residues.

Directly binds bystin, and indirectly trophinin. In terms of tissue distribution, strong expression at implantation sites. Was exclusively localized to the apical side of the syncytiotrophoblast. Also found in macrophages.

The protein resides in the cytoplasm. Its function is as follows. Could be involved with bystin and trophinin in a cell adhesion molecule complex that mediates an initial attachment of the blastocyst to uterine epithelial cells at the time of the embryo implantation. This chain is Tastin (TROAP), found in Homo sapiens (Human).